A 95-amino-acid chain; its full sequence is Integration host factor subunit beta (95 aa).

Residues 56–76 (RAPRTGRNPKTGTSVELDGKY) are disordered.

It belongs to the bacterial histone-like protein family. Heterodimer of an alpha and a beta chain.

This protein is one of the two subunits of integration host factor, a specific DNA-binding protein that functions in genetic recombination as well as in transcriptional and translational control. The polypeptide is Integration host factor subunit beta (Shewanella denitrificans (strain OS217 / ATCC BAA-1090 / DSM 15013)).